A 142-amino-acid chain; its full sequence is Peptide methionine sulfoxide reductase MsrB (142 aa).

Residues 3 to 126 enclose the MsrB domain; sequence KEELKKKLSP…NSAALRFIPF (124 aa). Catalysis depends on cysteine 115, which acts as the Nucleophile.

The protein belongs to the MsrB Met sulfoxide reductase family.

The catalysed reaction is L-methionyl-[protein] + [thioredoxin]-disulfide + H2O = L-methionyl-(R)-S-oxide-[protein] + [thioredoxin]-dithiol. This Lactococcus lactis subsp. cremoris (strain SK11) protein is Peptide methionine sulfoxide reductase MsrB.